A 288-amino-acid chain; its full sequence is Transposase InsF for insertion sequence IS3fB (288 aa).

In terms of domain architecture, Integrase catalytic spans 124 to 287 (YASGPNQKWA…SPEQFENQNL (164 aa)).

This sequence belongs to the transposase IS3/IS150/IS904 family.

Involved in the transposition of the insertion sequence IS3. This chain is Transposase InsF for insertion sequence IS3fB (insF7), found in Escherichia coli (strain K12).